The following is a 189-amino-acid chain: Ribosome maturation factor RimM (189 aa).

Residues 95 to 169 (DEDEFFQTDL…IIKVEPHAAG (75 aa)) enclose the PRC barrel domain. The disordered stretch occupies residues 168–189 (AGLIADEHDNPPHESGKKPKKP). The span at 172–189 (ADEHDNPPHESGKKPKKP) shows a compositional bias: basic and acidic residues.

It belongs to the RimM family. As to quaternary structure, binds ribosomal protein uS19.

The protein resides in the cytoplasm. Its function is as follows. An accessory protein needed during the final step in the assembly of 30S ribosomal subunit, possibly for assembly of the head region. Essential for efficient processing of 16S rRNA. May be needed both before and after RbfA during the maturation of 16S rRNA. It has affinity for free ribosomal 30S subunits but not for 70S ribosomes. This is Ribosome maturation factor RimM from Brucella abortus (strain S19).